Reading from the N-terminus, the 262-residue chain is Sepiapterin reductase (262 aa).

The residue at position 1 (Met-1) is an N-acetylmethionine. 15–21 (GASRGFG) is an NADP(+) binding site. Ser-33 is modified (phosphoserine). Position 43–44 (43–44 (RS)) interacts with NADP(+). Ser-46 carries the phosphoserine; by CaMK2; in vitro modification. NADP(+) is bound at residue 70 to 71 (DL). Substrate contacts are provided by residues 158-159 (SL) and Tyr-171. Lys-175 is a binding site for NADP(+). Residue Ser-196 is modified to Phosphoserine; by CaMK2; in vitro. Gly-200 serves as a coordination point for substrate. 202 to 207 (LDTNMQ) contributes to the NADP(+) binding site. Residue Ser-214 is modified to Phosphoserine; by CaMK2; in vitro. Substrate is bound at residue Asp-258.

The protein belongs to the sepiapterin reductase family. In terms of assembly, homodimer. Post-translationally, in vitro phosphorylation of Ser-46, Ser-196 and Ser-214 by CaMK2 does not change kinetic parameters.

Its subcellular location is the cytoplasm. The catalysed reaction is L-erythro-7,8-dihydrobiopterin + NADP(+) = L-sepiapterin + NADPH + H(+). It catalyses the reaction (6R)-L-erythro-5,6,7,8-tetrahydrobiopterin + 2 NADP(+) = 6-pyruvoyl-5,6,7,8-tetrahydropterin + 2 NADPH + 2 H(+). Catalyzes the final one or two reductions in tetra-hydrobiopterin biosynthesis to form 5,6,7,8-tetrahydrobiopterin. The sequence is that of Sepiapterin reductase (Spr) from Rattus norvegicus (Rat).